Reading from the N-terminus, the 183-residue chain is Holliday junction branch migration complex subunit RuvA (183 aa).

Positions 1–63 (MIVGLIGVVE…EDANLLYGFL (63 aa)) are domain I. Residues 64-139 (EESEKILFER…FFIQDENRPA (76 aa)) form a domain II region. Position 139 (A139) is a region of interest, flexible linker. The domain III stretch occupies residues 139–183 (ARNEVFLALESLGFKSAEINKVLKTLKPNLSIEAAIKEALQQLRS).

It belongs to the RuvA family. Homotetramer. Forms an RuvA(8)-RuvB(12)-Holliday junction (HJ) complex. HJ DNA is sandwiched between 2 RuvA tetramers; dsDNA enters through RuvA and exits via RuvB. An RuvB hexamer assembles on each DNA strand where it exits the tetramer. Each RuvB hexamer is contacted by two RuvA subunits (via domain III) on 2 adjacent RuvB subunits; this complex drives branch migration. In the full resolvosome a probable DNA-RuvA(4)-RuvB(12)-RuvC(2) complex forms which resolves the HJ.

The protein resides in the cytoplasm. Its function is as follows. The RuvA-RuvB-RuvC complex processes Holliday junction (HJ) DNA during genetic recombination and DNA repair, while the RuvA-RuvB complex plays an important role in the rescue of blocked DNA replication forks via replication fork reversal (RFR). RuvA specifically binds to HJ cruciform DNA, conferring on it an open structure. The RuvB hexamer acts as an ATP-dependent pump, pulling dsDNA into and through the RuvAB complex. HJ branch migration allows RuvC to scan DNA until it finds its consensus sequence, where it cleaves and resolves the cruciform DNA. This is Holliday junction branch migration complex subunit RuvA from Helicobacter pylori (strain HPAG1).